The chain runs to 29 residues: Vodo peptide N (29 aa).

A cross-link (cyclopeptide (Gly-Asn)) is located at residues glycine 1–asparagine 29. 3 disulfides stabilise this stretch: cysteine 5–cysteine 19, cysteine 9–cysteine 21, and cysteine 14–cysteine 26.

This is a cyclic peptide.

Its function is as follows. Probably participates in a plant defense mechanism. The polypeptide is Vodo peptide N (Viola odorata (Sweet violet)).